We begin with the raw amino-acid sequence, 143 residues long: Transcriptional regulator MraZ (143 aa).

2 SpoVT-AbrB domains span residues 5 to 47 (EYKH…SLKE) and 76 to 119 (ACEC…SENN).

Belongs to the MraZ family. Forms oligomers.

It is found in the cytoplasm. It localises to the nucleoid. In Caldicellulosiruptor bescii (strain ATCC BAA-1888 / DSM 6725 / KCTC 15123 / Z-1320) (Anaerocellum thermophilum), this protein is Transcriptional regulator MraZ.